We begin with the raw amino-acid sequence, 160 residues long: MRCPSCSSLDTQVKDSRPTEDSSVIRRRRVCLACNFRFTTFERVQLRELTVIKRNGRRVPFDRDKLVRSLQISLRKRPVDPERLEEMVSAVVRELESGGESEISSEAIGEIVMEHLRKLDDVAYVRFASVYRNFREAKDFEAVLGELSSDELARAALLRK.

Residues 1–11 show a composition bias toward polar residues; sequence MRCPSCSSLDT. The disordered stretch occupies residues 1–20; sequence MRCPSCSSLDTQVKDSRPTE. A zinc finger spans residues 3 to 34; that stretch reads CPSCSSLDTQVKDSRPTEDSSVIRRRRVCLAC. One can recognise an ATP-cone domain in the interval 49–139; it reads LTVIKRNGRR…VYRNFREAKD (91 aa).

This sequence belongs to the NrdR family. It depends on Zn(2+) as a cofactor.

Functionally, negatively regulates transcription of bacterial ribonucleotide reductase nrd genes and operons by binding to NrdR-boxes. The chain is Transcriptional repressor NrdR from Rhodopseudomonas palustris (strain BisA53).